The following is a 372-amino-acid chain: Germination protease (372 aa).

A propeptide spanning residues 1-15 is cleaved from the precursor; the sequence is MNRSIDLSMYSVRTD.

This sequence belongs to the peptidase A25 family. Homotetramer. In terms of processing, autoproteolytically processed. The inactive tetrameric zymogen termed p46 autoprocesses to a smaller form termed p41, which is active only during spore germination.

The catalysed reaction is Endopeptidase action with P4 Glu or Asp, P1 preferably Glu &gt; Asp, P1' hydrophobic and P2' Ala.. Its function is as follows. Initiates the rapid degradation of small, acid-soluble proteins during spore germination. The chain is Germination protease from Geobacillus sp. (strain WCH70).